Reading from the N-terminus, the 783-residue chain is Polyribonucleotide nucleotidyltransferase 1, mitochondrial (783 aa).

A mitochondrion-targeting transit peptide spans 1 to 46 (MAACRYCCSCLRLRPLSDGPFCLPGRDRALTQLLVRALWSSTGSRA). 4 positions are modified to N6-acetyllysine: Lys-250, Lys-264, Lys-285, and Lys-289. The residue at position 552 (Lys-552) is an N6-succinyllysine. Residues 605 to 664 (PVVETVQVPLSKRAKFVGPGGYNLKKLQAETGVTISQVDEETFSVFAPTPSALHEARDFI) form the KH domain. One can recognise an S1 motif domain in the interval 679 to 750 (GAVYTATITE…ADGRMRLSRK (72 aa)). 2 positions are modified to phosphoserine: Ser-754 and Ser-782.

The protein belongs to the polyribonucleotide nucleotidyltransferase family. As to quaternary structure, homotrimer; in free form. Homooligomer. Component of the mitochondrial degradosome (mtEXO) complex which is a heteropentamer containing 2 copies of SUPV3L1 and 3 copies of PNPT1. As part of the mitochondrial degradosome complex, interacts with GRSF1 in an RNA-dependent manner; the interaction enhances the activity of the complex. Interacts with TCL1A; the interaction has no effect on PNPT1 exonuclease activity.

It is found in the cytoplasm. The protein resides in the mitochondrion matrix. Its subcellular location is the mitochondrion intermembrane space. It catalyses the reaction RNA(n+1) + phosphate = RNA(n) + a ribonucleoside 5'-diphosphate. RNA-binding protein implicated in numerous RNA metabolic processes. Catalyzes the phosphorolysis of single-stranded polyribonucleotides processively in the 3'-to-5' direction. Mitochondrial intermembrane factor with RNA-processing exoribonulease activity. Component of the mitochondrial degradosome (mtEXO) complex, that degrades 3' overhang double-stranded RNA with a 3'-to-5' directionality in an ATP-dependent manner. Involved in the degradation of non-coding mitochondrial transcripts (MT-ncRNA) and tRNA-like molecules. Required for correct processing and polyadenylation of mitochondrial mRNAs. Plays a role as a cytoplasmic RNA import factor that mediates the translocation of small RNA components like the 5S RNA, the RNA subunit of ribonuclease P and the mitochondrial RNA-processing (MRP) RNA, into the mitochondrial matrix. Plays a role in mitochondrial morphogenesis and respiration; regulates the expression of the electron transport chain (ETC) components at the mRNA and protein levels. In the cytoplasm, shows a 3'-to-5' exoribonuclease mediating mRNA degradation activity; degrades c-myc mRNA upon treatment with IFNB1/IFN-beta, resulting in a growth arrest in melanoma cells. Regulates the stability of specific mature miRNAs in melanoma cells; specifically and selectively degrades miR-221, preferentially. Also plays a role in RNA cell surveillance by cleaning up oxidized RNAs. Binds to the RNA subunit of ribonuclease P, MRP RNA and miR-221 microRNA. This Pongo abelii (Sumatran orangutan) protein is Polyribonucleotide nucleotidyltransferase 1, mitochondrial (PNPT1).